A 266-amino-acid chain; its full sequence is Probable carboxylesterase Os04g0669500 (266 aa).

Active-site charge relay system residues include serine 154, aspartate 208, and histidine 240.

It belongs to the AB hydrolase superfamily. AB hydrolase 2 family.

Its function is as follows. Possesses carboxylesterase activity in vitro. This chain is Probable carboxylesterase Os04g0669500, found in Oryza sativa subsp. japonica (Rice).